The chain runs to 441 residues: Serine/threonine-protein kinase prk-2 (441 aa).

One can recognise a Protein kinase domain in the interval 31–285 (YKLKAELGRG…LEAILNHPWV (255 aa)). ATP-binding positions include 37–45 (LGRGGFGVV) and Lys60. Catalysis depends on Asp158, which acts as the Proton acceptor. A disordered region spans residues 301 to 364 (QKKTSESSDD…NQKKPNHKEF (64 aa)). Residues 303 to 320 (KTSESSDDHHSETLGDHS) are compositionally biased toward basic and acidic residues. Polar residues predominate over residues 328–338 (PPTSSVSQQPG).

It belongs to the protein kinase superfamily. Ser/Thr protein kinase family. PIM subfamily. Mg(2+) is required as a cofactor.

It carries out the reaction L-seryl-[protein] + ATP = O-phospho-L-seryl-[protein] + ADP + H(+). The catalysed reaction is L-threonyl-[protein] + ATP = O-phospho-L-threonyl-[protein] + ADP + H(+). Involved in the negative regulation of synaptic differentiation in PLM neurons. The polypeptide is Serine/threonine-protein kinase prk-2 (Caenorhabditis elegans).